A 95-amino-acid polypeptide reads, in one-letter code: DNA-directed RNA polymerase subunit omega (95 aa).

Belongs to the RNA polymerase subunit omega family. In terms of assembly, the RNAP catalytic core consists of 2 alpha, 1 beta, 1 beta' and 1 omega subunit. When a sigma factor is associated with the core the holoenzyme is formed, which can initiate transcription.

The catalysed reaction is RNA(n) + a ribonucleoside 5'-triphosphate = RNA(n+1) + diphosphate. Functionally, promotes RNA polymerase assembly. Latches the N- and C-terminal regions of the beta' subunit thereby facilitating its interaction with the beta and alpha subunits. The chain is DNA-directed RNA polymerase subunit omega from Colwellia psychrerythraea (strain 34H / ATCC BAA-681) (Vibrio psychroerythus).